The sequence spans 533 residues: Lysine--tRNA ligase (533 aa).

Positions 28–36 (PSGHIHIGN) match the 'HIGH' region motif. Positions 278-282 (PMSSS) match the 'KMSKS' region motif.

The protein belongs to the class-I aminoacyl-tRNA synthetase family.

The protein resides in the cytoplasm. It carries out the reaction tRNA(Lys) + L-lysine + ATP = L-lysyl-tRNA(Lys) + AMP + diphosphate. In Methanococcus maripaludis (strain DSM 14266 / JCM 13030 / NBRC 101832 / S2 / LL), this protein is Lysine--tRNA ligase (lysS).